The chain runs to 245 residues: Dehydrogenase/reductase SDR family member 6 (245 aa).

Residues 16-18, aspartate 37, and aspartate 58 contribute to the NAD(+) site; that span reads QGI. Arginine 144 contacts substrate. The active-site Proton acceptor is tyrosine 147. Residues lysine 151 and 180–184 contribute to the NAD(+) site; that span reads VDTPS. The substrate site is built by arginine 188 and arginine 205.

This sequence belongs to the short-chain dehydrogenases/reductases (SDR) family. Homotetramer. As to expression, detected in liver, spleen and macrophages. Widely expressed.

The protein localises to the cytoplasm. It carries out the reaction cis-4-hydroxy-L-proline + NAD(+) = 4-oxo-L-proline + NADH + H(+). The enzyme catalyses (R)-3-hydroxybutanoate + NAD(+) = acetoacetate + NADH + H(+). It participates in amino-acid metabolism. It functions in the pathway siderophore biosynthesis. NAD(H)-dependent dehydrogenase/reductase with a preference for cyclic substrates. Catalyzes stereoselective conversion of 4-oxo-L-proline to cis-4-hydroxy-L-proline, likely a detoxification mechanism for ketoprolines. Mediates the formation of 2,5-dihydroxybenzoate (2,5-DHBA), a siderophore that chelates free cytoplasmic iron and associates with LCN2, thereby regulating iron transport and homeostasis while protecting cells against free radical-induced oxidative stress. The iron-siderophore complex is imported into mitochondria, providing an iron source for mitochondrial metabolic processes in particular heme synthesis. May act as a 3-hydroxybutyrate dehydrogenase. In terms of biological role, (Microbial infection) May play a role in susceptibility to bacterial infection by providing an assimilable source of iron that is exploited by pathogenic bacteria. Host iron-siderophore complexes can be used by bacteria to promote their own growth and pathogenicity. The protein is Dehydrogenase/reductase SDR family member 6 of Mus musculus (Mouse).